Consider the following 113-residue polypeptide: uncharacterized protein (113 aa).

It belongs to the ycf68 family.

It localises to the plastid. The protein resides in the chloroplast. This is an uncharacterized protein from Eucalyptus globulus subsp. globulus (Tasmanian blue gum).